Consider the following 200-residue polypeptide: Urease accessory protein UreE (200 aa).

The interval 171 to 200 (HHGHAHPHPHDHDHQHGPGCAHGRHGHDHH) is disordered.

Belongs to the UreE family.

It is found in the cytoplasm. Involved in urease metallocenter assembly. Binds nickel. Probably functions as a nickel donor during metallocenter assembly. The protein is Urease accessory protein UreE of Burkholderia vietnamiensis (strain G4 / LMG 22486) (Burkholderia cepacia (strain R1808)).